A 1070-amino-acid polypeptide reads, in one-letter code: Carbamoyl phosphate synthase large chain (1070 aa).

Residues 1-401 (MPKRDDIKTI…ALLKAVRSLE (401 aa)) are carboxyphosphate synthetic domain. ATP is bound by residues Arg129, Arg169, Gly175, Gly176, Lys208, Ile210, Glu215, Gly241, Ile242, His243, Gln284, and Glu298. An ATP-grasp 1 domain is found at 133 to 327 (RDLMNELGEP…IAKLAAKIAV (195 aa)). Positions 284, 298, and 300 each coordinate Mg(2+). The Mn(2+) site is built by Gln284, Glu298, and Asn300. The segment at 402–546 (IGADHLLLEE…YSTYEEENES (145 aa)) is oligomerization domain. A carbamoyl phosphate synthetic domain region spans residues 547–929 (TRSAKESVIV…ALYKGFVASG (383 aa)). Positions 671–861 (EKALGILQIP…MANVATRVIL (191 aa)) constitute an ATP-grasp 2 domain. Residues Arg707, Arg746, Val748, Glu752, Gly777, Val778, His779, Ser780, Gln820, and Glu832 each coordinate ATP. Residues Gln820, Glu832, and Asn834 each coordinate Mg(2+). Residues Gln820, Glu832, and Asn834 each contribute to the Mn(2+) site. The 141-residue stretch at 930–1070 (TTMHDYGTVL…SEVKQPKARV (141 aa)) folds into the MGS-like domain. Positions 930–1070 (TTMHDYGTVL…SEVKQPKARV (141 aa)) are allosteric domain.

The protein belongs to the CarB family. As to quaternary structure, composed of two chains; the small (or glutamine) chain promotes the hydrolysis of glutamine to ammonia, which is used by the large (or ammonia) chain to synthesize carbamoyl phosphate. Tetramer of heterodimers (alpha,beta)4. Mg(2+) serves as cofactor. It depends on Mn(2+) as a cofactor.

The catalysed reaction is hydrogencarbonate + L-glutamine + 2 ATP + H2O = carbamoyl phosphate + L-glutamate + 2 ADP + phosphate + 2 H(+). It carries out the reaction hydrogencarbonate + NH4(+) + 2 ATP = carbamoyl phosphate + 2 ADP + phosphate + 2 H(+). It functions in the pathway amino-acid biosynthesis; L-arginine biosynthesis; carbamoyl phosphate from bicarbonate: step 1/1. Its pathway is pyrimidine metabolism; UMP biosynthesis via de novo pathway; (S)-dihydroorotate from bicarbonate: step 1/3. Its function is as follows. Large subunit of the glutamine-dependent carbamoyl phosphate synthetase (CPSase). CPSase catalyzes the formation of carbamoyl phosphate from the ammonia moiety of glutamine, carbonate, and phosphate donated by ATP, constituting the first step of 2 biosynthetic pathways, one leading to arginine and/or urea and the other to pyrimidine nucleotides. The large subunit (synthetase) binds the substrates ammonia (free or transferred from glutamine from the small subunit), hydrogencarbonate and ATP and carries out an ATP-coupled ligase reaction, activating hydrogencarbonate by forming carboxy phosphate which reacts with ammonia to form carbamoyl phosphate. This is Carbamoyl phosphate synthase large chain from Listeria monocytogenes serotype 4b (strain CLIP80459).